A 411-amino-acid chain; its full sequence is S-inosyl-L-homocysteine hydrolase (411 aa).

Residues Asp-121 and Glu-146 each coordinate substrate. 147–149 lines the NAD(+) pocket; it reads TTT. The substrate site is built by Lys-176 and Asp-180. Residues Asn-181, 210–215, Glu-233, Asn-268, 289–291, and Asn-335 contribute to the NAD(+) site; these read GYGWCG and SGH.

The protein belongs to the adenosylhomocysteinase family. NAD(+) serves as cofactor.

It localises to the cytoplasm. The catalysed reaction is S-inosyl-L-homocysteine + H2O = L-homocysteine + inosine. It functions in the pathway amino-acid biosynthesis; S-adenosyl-L-methionine biosynthesis. Functionally, catalyzes the hydrolysis of S-inosyl-L-homocysteine (SIH) to L-homocysteine (Hcy) and inosine. Likely functions in a S-adenosyl-L-methionine (SAM) recycling pathway from S-adenosyl-L-homocysteine (SAH) produced from SAM-dependent methylation reactions. Can also catalyze the reverse reaction in vitro, i.e. the synthesis of SIH from Hcy and inosine. This Methanosarcina acetivorans (strain ATCC 35395 / DSM 2834 / JCM 12185 / C2A) protein is S-inosyl-L-homocysteine hydrolase.